The chain runs to 527 residues: UvrABC system protein C (527 aa).

A GIY-YIG domain is found at 9–87 (KNPGCYIYKN…IKKYSPKYNI (79 aa)). Residues 191 to 226 (DSLIHELKNEMNEKSKNLQFEEALLIREEINAIERL) form the UVR domain.

Belongs to the UvrC family. In terms of assembly, interacts with UvrB in an incision complex.

It localises to the cytoplasm. Functionally, the UvrABC repair system catalyzes the recognition and processing of DNA lesions. UvrC both incises the 5' and 3' sides of the lesion. The N-terminal half is responsible for the 3' incision and the C-terminal half is responsible for the 5' incision. In Methanococcus maripaludis (strain DSM 14266 / JCM 13030 / NBRC 101832 / S2 / LL), this protein is UvrABC system protein C.